The primary structure comprises 298 residues: Ethanolamine ammonia-lyase small subunit (298 aa).

The adenosylcob(III)alamin site is built by valine 210, glutamate 231, and cysteine 261.

It belongs to the EutC family. In terms of assembly, the basic unit is a heterodimer which dimerizes to form tetramers. The heterotetramers trimerize; 6 large subunits form a core ring with 6 small subunits projecting outwards. Adenosylcob(III)alamin is required as a cofactor.

It is found in the bacterial microcompartment. It carries out the reaction ethanolamine = acetaldehyde + NH4(+). The protein operates within amine and polyamine degradation; ethanolamine degradation. Functionally, catalyzes the deamination of various vicinal amino-alcohols to oxo compounds. Allows this organism to utilize ethanolamine as the sole source of nitrogen and carbon in the presence of external vitamin B12. This is Ethanolamine ammonia-lyase small subunit from Salmonella schwarzengrund (strain CVM19633).